Here is a 259-residue protein sequence, read N- to C-terminus: MSAVTAVKPEDVYQINDLNLWYGEHHALKNINLTIPEYEITAIIGPSGCGKSTFIKTLNLMINMVPNVKMTGEISYNGTNVLNSKVDLVELRKKVGMVFQKGNPFPQSIFDNVAYGPRIHGLKNKKELNERVEKALVDVALWDEVKDRLHSQALGLSGGQQQRLCIARALATNPDVLLMDEPTSALDPVSTLKIEELMLKLKEKYTIAIVTHNMQQASRISDQTAFFLMGELIECNDTVKMFSSPDDHRTKDYITGRFG.

An ABC transporter domain is found at 7–254 (VKPEDVYQIN…PDDHRTKDYI (248 aa)). Residue 45–52 (GPSGCGKS) coordinates ATP.

Belongs to the ABC transporter superfamily. Phosphate importer (TC 3.A.1.7) family. The complex is composed of two ATP-binding proteins (PstB), two transmembrane proteins (PstC and PstA) and a solute-binding protein (PstS).

The protein resides in the cell membrane. It carries out the reaction phosphate(out) + ATP + H2O = ADP + 2 phosphate(in) + H(+). In terms of biological role, part of the ABC transporter complex PstSACB involved in phosphate import. Responsible for energy coupling to the transport system. This Bacillus licheniformis (strain ATCC 14580 / DSM 13 / JCM 2505 / CCUG 7422 / NBRC 12200 / NCIMB 9375 / NCTC 10341 / NRRL NRS-1264 / Gibson 46) protein is Phosphate import ATP-binding protein PstB 1.